We begin with the raw amino-acid sequence, 255 residues long: Reaction center protein L chain (255 aa).

The next 3 membrane-spanning stretches (helical) occupy residues glycine 12–leucine 35, glycine 64–glycine 92, and leucine 95–glycine 120. Positions 133 and 153 each coordinate (7R,8Z)-bacteriochlorophyll b. A helical membrane pass occupies residues asparagine 150 to asparagine 179. Position 170 (histidine 170) interacts with Fe cation. Phenylalanine 196 lines the a ubiquinone pocket. The helical transmembrane segment at glycine 205–serine 231 threads the bilayer. Histidine 210 serves as a coordination point for Fe cation.

It belongs to the reaction center PufL/M/PsbA/D family. In terms of assembly, reaction center is composed of four bacteriochlorophylls, two bacteriopheophytins, two ubiquinones, one iron, and three highly hydrophobic polypeptide chains (designated L, M, and H).

The protein resides in the cellular chromatophore membrane. Its function is as follows. The reaction center is a membrane-bound complex that mediates the initial photochemical event in the electron transfer process of photosynthesis. This is Reaction center protein L chain (pufL) from Pararhodospirillum photometricum (Rhodospirillum photometricum).